Reading from the N-terminus, the 652-residue chain is Carboxypeptidase Z (652 aa).

Residues 1–20 (MPTTPLLLAALAALAALAVA) form the signal peptide. Residues 41–163 (THSATCVDLH…APEEEGCYDP (123 aa)) enclose the FZ domain. Disulfide bonds link Cys-46–Cys-112, Cys-54–Cys-105, Cys-96–Cys-132, Cys-121–Cys-160, and Cys-125–Cys-149. Asn-60 carries N-linked (GlcNAc...) asparagine glycosylation. Positions 189 to 505 (AHHSYAQMVR…EPLLNFLEMV (317 aa)) constitute a Peptidase M14 domain. Zn(2+)-binding residues include His-251 and Glu-254. An N-linked (GlcNAc...) asparagine glycan is attached at Asn-284. Zn(2+) is bound at residue His-383. The Proton donor/acceptor role is filled by Glu-475. The disordered stretch occupies residues 594-628 (FLPGPSRALPRSLDPQGAPAQLDFEPPRARRQPAS).

Belongs to the peptidase M14 family. Requires Zn(2+) as cofactor. Abundantly expressed in the placenta, with low to moderate levels in the brain, lung, thymus and kidney.

It is found in the secreted. The protein localises to the extracellular space. The protein resides in the extracellular matrix. Its activity is regulated as follows. Inhibited by 2-mercaptomethyl-3-guanidinoethylthiopropanoic acid (MGTA) and guanidinoethylmercaptosuccinic acid (GEMSA). Inhibited by chelating agents such as EDTA and EGTA. In terms of biological role, cleaves substrates with C-terminal arginine residues. Probably modulates the Wnt signaling pathway, by cleaving some undefined protein. May play a role in cleavage during prohormone processing. The sequence is that of Carboxypeptidase Z (Cpz) from Rattus norvegicus (Rat).